The chain runs to 472 residues: WAS protein family homolog DDB_G0292878 (472 aa).

The segment at 279-472 is disordered; it reads LPTYDNSNSG…ESDTDSSEWE (194 aa). Positions 282–299 are enriched in polar residues; it reads YDNSNSGSAPVNQSSGGD. Residues 300 to 314 show a composition bias toward low complexity; sequence NNVNNNNNNNNSNNS. Pro residues predominate over residues 320–356; that stretch reads PPQPTNAPPPPPPPPQSANAPPPPPPPPVSAPPPFNP. The segment covering 363–373 has biased composition (acidic residues); sequence NDDDDDDDDDN. The span at 374-383 shows a compositional bias: gly residues; it reads GGGGGPGGAI. One can recognise a WH2 domain in the interval 382-401; the sequence is AIGDLLADIRRGHKNRLKKA. Residues 457 to 472 show a composition bias toward acidic residues; it reads TDDQDGESDTDSSEWE.

It belongs to the WASH1 family.

Functionally, acts as a nucleation-promoting factor by activating the Arp2/3 complex to induce actin polymerization. This Dictyostelium discoideum (Social amoeba) protein is WAS protein family homolog DDB_G0292878.